A 171-amino-acid polypeptide reads, in one-letter code: ATP synthase subunit b (171 aa).

A helical membrane pass occupies residues 4–24 (IAFFVICVGFPSLIFASASIQ).

The protein belongs to the ATPase B chain family. As to quaternary structure, F-type ATPases have 2 components, F(1) - the catalytic core - and F(0) - the membrane proton channel. F(1) has five subunits: alpha(3), beta(3), gamma(1), delta(1), epsilon(1). F(0) has three main subunits: a(1), b(2) and c(10-14). The alpha and beta chains form an alternating ring which encloses part of the gamma chain. F(1) is attached to F(0) by a central stalk formed by the gamma and epsilon chains, while a peripheral stalk is formed by the delta and b chains.

The protein resides in the cell inner membrane. F(1)F(0) ATP synthase produces ATP from ADP in the presence of a proton or sodium gradient. F-type ATPases consist of two structural domains, F(1) containing the extramembraneous catalytic core and F(0) containing the membrane proton channel, linked together by a central stalk and a peripheral stalk. During catalysis, ATP synthesis in the catalytic domain of F(1) is coupled via a rotary mechanism of the central stalk subunits to proton translocation. Its function is as follows. Component of the F(0) channel, it forms part of the peripheral stalk, linking F(1) to F(0). This chain is ATP synthase subunit b, found in Helicobacter hepaticus (strain ATCC 51449 / 3B1).